We begin with the raw amino-acid sequence, 621 residues long: Endoglucanase 25 (621 aa).

The interval 1 to 26 (MYGRDPWGGPLEINTADSATDDDRSR) is disordered. Residues 1–70 (MYGRDPWGGP…DLGCIIVSRK (70 aa)) lie on the Cytoplasmic side of the membrane. The segment at 48–49 (LL) is polarized targeting signal 1 (PTS1). The polarized targeting signal 2 (PTS2) stretch occupies residues 59 to 62 (YVDL). A helical; Signal-anchor for type II membrane protein membrane pass occupies residues 71-91 (IFVWTVGTLVAAALLAGFITL). Over 92 to 621 (IVKTVPRHHP…PPPPPAPWKP (530 aa)) the chain is Extracellular. 2 N-linked (GlcNAc...) asparagine glycosylation sites follow: N108 and N133. D165 (nucleophile) is an active-site residue. Residues N216, N324, N345, N408, and N425 are each glycosylated (N-linked (GlcNAc...) asparagine). Active-site residues include H513 and D561. N567 is a glycosylation site (N-linked (GlcNAc...) asparagine). E570 is an active-site residue.

This sequence belongs to the glycosyl hydrolase 9 (cellulase E) family. In terms of processing, glycosylated. N-glycosylation of KOR in the endoplasmic reticulum followed by N-glycan modifications in the Golgi are essential for catalytic activity. Highly expressed in roots and stems, at intermediate levels in leaves and flowers, and at lower levels in siliques. Expressed in xylem (at protein level).

The protein resides in the cell membrane. The enzyme catalyses Endohydrolysis of (1-&gt;4)-beta-D-glucosidic linkages in cellulose, lichenin and cereal beta-D-glucans.. Functionally, required for cellulose microfibril formation. Involved in cell wall assembly during cell elongation and cell plate maturation in cytokinesis. Required for secondary cell wall formation in the developing xylem. May cycle through different intracellular compartments, including plasma membrane. This chain is Endoglucanase 25 (KOR), found in Arabidopsis thaliana (Mouse-ear cress).